The sequence spans 287 residues: Type 1 encapsulin shell protein EncA (287 aa).

The protein belongs to the encapsulin family. Family 1 subfamily. As to quaternary structure, the 32 nm encapsulin nanocompartment is formed by 180 subunits; monomers form pentamers which assemble to form shells. There are 36 pores where the pentamers meet as well as 3-fold axis channels and dimer channels. The N-terminus of the protein is inside the shell.

It is found in the encapsulin nanocompartment. In terms of biological role, shell component of a type 1, iron-storage encapsulin nanocompartment. Encapsulin nanocompartments are 32 nm in diameter with an iron- and phosphorus-rich core (4Fe:1P) about 24 nm in diameter. Upon expression in E.coli most particles are 32 nm, 20% are 18 nm. The core is filled with an average of 14 dense granules, 5-6 nm in diameter that are not evenly distributed. Each nanocompartment is estimated to hold 30,000-35,000 Fe atoms. The minor proteins EncB, EncC and EncD probably lie against the interior face of the nanocompartment. The polypeptide is Type 1 encapsulin shell protein EncA (Myxococcus xanthus (strain DK1622)).